We begin with the raw amino-acid sequence, 114 residues long: MGIRPTLQTNPLVDLLISTSQTQLQNAGLPFPPRSFGCLLVRHSPGCLPGSLWNLPRSRLPSCLPICLPRCRCWLNRERWRKGDDVFSDFCTKFVSTLIGPTSFAFRFVEFFYL.

The protein belongs to the scolopendra neurotoxin 8 family. Contains 3 disulfide bonds. As to expression, expressed by the venom gland.

Its subcellular location is the secreted. This chain is Putative neurotoxin 7, found in Scolopendra mutilans (Chinese red-headed centipede).